Reading from the N-terminus, the 124-residue chain is UPF0738 protein GWCH70_0774 (124 aa).

This sequence belongs to the UPF0738 family.

This Geobacillus sp. (strain WCH70) protein is UPF0738 protein GWCH70_0774.